We begin with the raw amino-acid sequence, 478 residues long: Maintenance of telomere capping protein 1 (478 aa).

Residues 1-153 (MSENKNSEAE…LHDPIASISN (153 aa)) form a disordered region. Basic and acidic residues-rich tracts occupy residues 77-87 (TDKKGVEKKAP) and 95-124 (AQDE…QQQE). A compositionally biased stretch (acidic residues) spans 125–141 (KEEEEEEEEEEEEEEEE). Residue Ser273 is modified to Phosphoserine. Composition is skewed to basic and acidic residues over residues 321-336 (QKQQ…DDRS) and 421-435 (SEER…KQKE). 2 disordered regions span residues 321 to 341 (QKQQ…ISSN) and 416 to 448 (TGST…IIDP). Phosphoserine is present on Ser436. A compositionally biased stretch (acidic residues) spans 436–447 (SEDEDEDDEIID).

The protein belongs to the MTC1 family. In terms of assembly, interacts with ribosomes.

It localises to the cytoplasm. The protein resides in the cytoplasmic vesicle. The protein localises to the COPI-coated vesicle. Its function is as follows. Involved in telomere capping. This chain is Maintenance of telomere capping protein 1 (MTC1), found in Saccharomyces cerevisiae (strain ATCC 204508 / S288c) (Baker's yeast).